Consider the following 468-residue polypeptide: ATP synthase subunit beta (468 aa).

153-160 serves as a coordination point for ATP; it reads GGAGVGKT.

This sequence belongs to the ATPase alpha/beta chains family. As to quaternary structure, F-type ATPases have 2 components, CF(1) - the catalytic core - and CF(0) - the membrane proton channel. CF(1) has five subunits: alpha(3), beta(3), gamma(1), delta(1), epsilon(1). CF(0) has three main subunits: a(1), b(2) and c(9-12). The alpha and beta chains form an alternating ring which encloses part of the gamma chain. CF(1) is attached to CF(0) by a central stalk formed by the gamma and epsilon chains, while a peripheral stalk is formed by the delta and b chains.

It localises to the cell inner membrane. It carries out the reaction ATP + H2O + 4 H(+)(in) = ADP + phosphate + 5 H(+)(out). In terms of biological role, produces ATP from ADP in the presence of a proton gradient across the membrane. The catalytic sites are hosted primarily by the beta subunits. The chain is ATP synthase subunit beta from Nautilia profundicola (strain ATCC BAA-1463 / DSM 18972 / AmH).